The primary structure comprises 578 residues: Endonuclease GajA (578 aa).

Residues 1–341 form an ATPase domain region; sequence MKFSNITIKN…RLIRVHSTEK (341 aa). 32–36 provides a ligand contact to ATP; the sequence is DIGKT. The tract at residues 370–510 is toprim domain; that stretch reads LFAERVLLIE…LGERIYLSEI (141 aa). Residues Glu379, Glu383, Asp463, Glu464, and Glu513 each coordinate a divalent metal cation.

In terms of assembly, homotetramer. Forms the core of the anti-phage defense complex. Interacts with GajB; 2 GajB dimers dock at opposite sides of the GajA complex to form a 4:4 GajA-GajB assembly (GajAB). GajAB interacts with Bacillus phage Phi3T Gad1 protein; this interaction forms a 4:4:8 GajAB-Gad1 complex and leads to GajAB inhibition. Mg(2+) serves as cofactor. Requires Mn(2+) as cofactor.

Endonuclease activity inhibited by all NTPs, dNTPs, NDPs (at 0.5 mM, UDP not tested) and AMP-PNP; not inhibited by any tested NMP, dNMP or nucleoside. Inhibited by 100 mM NaCl, 100 mM KCl, 0.5 mM Co(2+) and 0.5 mM Ni(2+). Functionally, component of antiviral defense system Gabija type I, composed of GajA and GajB. Endonuclease that nicks double-stranded DNA within the sequence 5'-TNNNCGGGNNA-3' in the absence of nucleotides (NTP, dNTP and NDPs), cleaving after C-1. Has no detected ATPase activity. Expression of Gabija type I in B.subtilis (strain BEST7003) confers resistance to phages phi105, phi29, rho14, SpBeta and SBSphiC. Expression of Gabija type I in E.coli B (strain ATCC 11303) confers resistance to phage T7. It is thought that this enzyme is strongly suppressed during physiological growth (in E.coli total nucleotide concentration is over 8.7 mM in mid-log phase), but during viral replication, when nucleotides are rapidly consumed, it is de-suppressed and degrades target DNA. This chain is Endonuclease GajA, found in Bacillus cereus (strain VD045).